We begin with the raw amino-acid sequence, 1252 residues long: ATP-dependent helicase/nuclease subunit A (1252 aa).

In terms of domain architecture, UvrD-like helicase ATP-binding spans 6–489; that stretch reads TNWTEEQKEA…VLLYKNFRSR (484 aa). 27–34 is an ATP binding site; the sequence is AAAGSGKT. Residues 523-811 enclose the UvrD-like helicase C-terminal domain; the sequence is ANYEEIEENL…RIMSIHKSKG (289 aa).

It belongs to the helicase family. AddA subfamily. In terms of assembly, heterodimer of AddA and AddB/RexB. It depends on Mg(2+) as a cofactor.

It carries out the reaction Couples ATP hydrolysis with the unwinding of duplex DNA by translocating in the 3'-5' direction.. It catalyses the reaction ATP + H2O = ADP + phosphate + H(+). Functionally, the heterodimer acts as both an ATP-dependent DNA helicase and an ATP-dependent, dual-direction single-stranded exonuclease. Recognizes the chi site generating a DNA molecule suitable for the initiation of homologous recombination. The AddA nuclease domain is required for chi fragment generation; this subunit has the helicase and 3' -&gt; 5' nuclease activities. The polypeptide is ATP-dependent helicase/nuclease subunit A (Clostridium acetobutylicum (strain ATCC 824 / DSM 792 / JCM 1419 / IAM 19013 / LMG 5710 / NBRC 13948 / NRRL B-527 / VKM B-1787 / 2291 / W)).